A 175-amino-acid chain; its full sequence is Adenine phosphoribosyltransferase (175 aa).

Belongs to the purine/pyrimidine phosphoribosyltransferase family. In terms of assembly, homodimer.

The protein localises to the cytoplasm. The enzyme catalyses AMP + diphosphate = 5-phospho-alpha-D-ribose 1-diphosphate + adenine. It participates in purine metabolism; AMP biosynthesis via salvage pathway; AMP from adenine: step 1/1. In terms of biological role, catalyzes a salvage reaction resulting in the formation of AMP, that is energically less costly than de novo synthesis. The sequence is that of Adenine phosphoribosyltransferase from Nitrosospira multiformis (strain ATCC 25196 / NCIMB 11849 / C 71).